Consider the following 204-residue polypeptide: MTQQEMITINAELRDVTKTKAIRSLRKKGNIPAVVYGKGHNNVNLTLSAKEFTKQYKLGFLSAHVIELDISGKKEYALVRDIQWHVVKDTIQHVDFQFVDKGSEIKIDIPLSFVNESKSPGIKLGGVLNVLCRSITVKCSPDKIPQAIEVDLSGKMIGQSVHISDVKLPGGVKLAAHEEENFTVVTISAADSGVEESQVETTEE.

The protein belongs to the bacterial ribosomal protein bL25 family. CTC subfamily. As to quaternary structure, part of the 50S ribosomal subunit; part of the 5S rRNA/L5/L18/L25 subcomplex. Contacts the 5S rRNA. Binds to the 5S rRNA independently of L5 and L18.

Its function is as follows. This is one of the proteins that binds to the 5S RNA in the ribosome where it forms part of the central protuberance. The polypeptide is Large ribosomal subunit protein bL25 (Wolbachia sp. subsp. Brugia malayi (strain TRS)).